A 318-amino-acid chain; its full sequence is Trans-prenyltransferase (318 aa).

The helical transmembrane segment at 1–21 (MLHLIYISIIVVLIIILISYT) threads the bilayer. Positions 85, 88, and 122 each coordinate isopentenyl diphosphate. Mg(2+)-binding residues include D129 and D135. R140 is a binding site for dimethylallyl diphosphate. R141 provides a ligand contact to isopentenyl diphosphate. 3 residues coordinate dimethylallyl diphosphate: K216, T217, and Q254.

It belongs to the FPP/GGPP synthase family. Asfivirus trans-prenyltransferase subfamily. Mg(2+) is required as a cofactor.

The protein localises to the host endoplasmic reticulum. It localises to the host membrane. It catalyses the reaction isopentenyl diphosphate + dimethylallyl diphosphate = (2E)-geranyl diphosphate + diphosphate. It carries out the reaction isopentenyl diphosphate + (2E)-geranyl diphosphate = (2E,6E)-farnesyl diphosphate + diphosphate. The catalysed reaction is isopentenyl diphosphate + (2E,6E)-farnesyl diphosphate = (2E,6E,10E)-geranylgeranyl diphosphate + diphosphate. The enzyme catalyses isopentenyl diphosphate + (2E,6E,10E)-geranylgeranyl diphosphate = (2E,6E,10E,14E)-geranylfarnesyl diphosphate + diphosphate. Its pathway is isoprenoid biosynthesis; farnesyl diphosphate biosynthesis; farnesyl diphosphate from geranyl diphosphate and isopentenyl diphosphate: step 1/1. It functions in the pathway isoprenoid biosynthesis; geranyl diphosphate biosynthesis; geranyl diphosphate from dimethylallyl diphosphate and isopentenyl diphosphate: step 1/1. It participates in isoprenoid biosynthesis; geranylgeranyl diphosphate biosynthesis; geranylgeranyl diphosphate from farnesyl diphosphate and isopentenyl diphosphate: step 1/1. Trans-prenyltransferase that catalyzes the sequential condensation of isopentenyl diphosphate (IPP) with different allylic diphosphates, such as dimethylallyl diphosphate (DMAPP), geranyl diphosphate (GPP), farnesyl diphosphate (FPP) and geranylgeranyl diphosphate (GGPP), farnesyl diphosphate being the best allylic substrate. The protein is Trans-prenyltransferase of African swine fever virus (isolate Warthog/Namibia/Wart80/1980) (ASFV).